Here is a 404-residue protein sequence, read N- to C-terminus: Growth/differentiation factor 6-A (404 aa).

An N-terminal signal peptide occupies residues 1 to 24; that stretch reads MDALRAVAFYALFVFLWSLPCCQS. Residues 25–284 constitute a propeptide that is removed on maturation; that stretch reads AALISQKRSK…LQFKARRRRR (260 aa). Asn91 carries an N-linked (GlcNAc...) asparagine glycan. The interval 263–304 is disordered; it reads KSRGDDDEEESALQFKARRRRRTALNNRHGKRHGKKSKSRCS. Positions 278–304 are enriched in basic residues; that stretch reads KARRRRRTALNNRHGKRHGKKSKSRCS. 3 cysteine pairs are disulfide-bonded: Cys303/Cys369, Cys332/Cys401, and Cys336/Cys403.

The protein belongs to the TGF-beta family. Homodimer; disulfide-linked. First expressed in late gastrula stage embryos (9.5 hours post fertilization (hpf)) in anterior neuroectoderm corresponding to the future dorsal part of the brain. Shortly after tailbud formation (11 hpf), expression expands to the entire neural region and is subsequently expressed in derivatives of the lateral neural plate and migrating neural crest cells, with the future midbrain and hindbrain showing strong expression. Also expressed weakly and transiently in the posterior embryo from 11.5 hpf to 15 hpf in the lateral mesoderm, and in ectoderm above the neural keel. At 14 hpf, expressed along the entire length of the embryo and starting around the 16-somite stage, expressed in the dorsal quadrant of the retina, representing the distal tip of the eye anlage. At this stage, also expressed in the hatching gland and the hypochord. At 24 hpf, expressed in the roof plate outlining the fourth brain ventricle, in the posterior hypochord, the primitive gut endoderm, the ventral tail mesenchyme, the dorsal part of the neural tube and the dorsal fin. Weakly expressed in the dorsal part of the posterior spinal cord and in blood cell precursors.

It localises to the secreted. Functionally, growth factor that controls proliferation and cellular differentiation in the retina. Plays a key role in regulating apoptosis during retinal development. Establishes dorsal-ventral positional information in the retina and controls the formation of the retinotectal map. Functions maternally in dorsal/ventral patterning to induce the expression of the zygotic bmp2b and bmp4 genes and ventralize embryos. Zygotic expression does not appear to regulate axis specification, but instead functions to establish the integrity of the axial vessels during embryonic development. May be involved in maintaining the identity of cells of the dorsal-most neural tube and of at least a subset of neural crest cells. The polypeptide is Growth/differentiation factor 6-A (gdf6a) (Danio rerio (Zebrafish)).